A 337-amino-acid chain; its full sequence is Tetraacyldisaccharide 4'-kinase (337 aa).

Residue 55–62 (NAGGTGKT) coordinates ATP.

The protein belongs to the LpxK family.

The enzyme catalyses a lipid A disaccharide + ATP = a lipid IVA + ADP + H(+). The protein operates within glycolipid biosynthesis; lipid IV(A) biosynthesis; lipid IV(A) from (3R)-3-hydroxytetradecanoyl-[acyl-carrier-protein] and UDP-N-acetyl-alpha-D-glucosamine: step 6/6. Transfers the gamma-phosphate of ATP to the 4'-position of a tetraacyldisaccharide 1-phosphate intermediate (termed DS-1-P) to form tetraacyldisaccharide 1,4'-bis-phosphate (lipid IVA). The chain is Tetraacyldisaccharide 4'-kinase from Dinoroseobacter shibae (strain DSM 16493 / NCIMB 14021 / DFL 12).